Reading from the N-terminus, the 299-residue chain is Kruppel-like factor 2 (299 aa).

Disordered regions lie at residues 19 to 38 (YQNA…SHHH) and 146 to 189 (YSFS…RRDK). The segment covering 23–38 (HHQHHQQHYHQQSHHH) has biased composition (basic residues). Positions 153–180 (SGKDEEDPRIPLKDRGRVYHPQSTEKPK) are enriched in basic and acidic residues. C2H2-type zinc fingers lie at residues 198–222 (HKCF…ERVH), 228–252 (YPCE…YRKH), and 258–280 (FACK…MKRH).

Belongs to the krueppel C2H2-type zinc-finger protein family. Expressed predominantly in intestine.

The protein localises to the nucleus. In terms of biological role, probable transcription factor which regulates lipid metabolism. The sequence is that of Kruppel-like factor 2 from Caenorhabditis elegans.